A 44-amino-acid chain; its full sequence is Protein PsbN (44 aa).

Residues 7–29 (FFTTFLGCLLLSITGYSIYVGFG) form a helical membrane-spanning segment.

Belongs to the PsbN family.

It is found in the plastid. The protein resides in the chloroplast thylakoid membrane. Its function is as follows. May play a role in photosystem I and II biogenesis. The sequence is that of Protein PsbN from Pleurastrum terricola (Filamentous green alga).